The chain runs to 833 residues: Glycerol-3-phosphate acyltransferase (833 aa).

The short motif at 309 to 314 is the HXXXXD motif element; the sequence is CHRSHI.

This sequence belongs to the GPAT/DAPAT family.

The protein resides in the cell inner membrane. It carries out the reaction sn-glycerol 3-phosphate + an acyl-CoA = a 1-acyl-sn-glycero-3-phosphate + CoA. Its pathway is phospholipid metabolism; CDP-diacylglycerol biosynthesis; CDP-diacylglycerol from sn-glycerol 3-phosphate: step 1/3. This chain is Glycerol-3-phosphate acyltransferase, found in Pseudomonas syringae pv. syringae (strain B728a).